Consider the following 894-residue polypeptide: Valine--tRNA ligase (894 aa).

Positions 48-58 (PNVTGFLHMGH) match the 'HIGH' region motif. The 'KMSKS' region motif lies at 527-531 (KMSKS). Lys-530 contacts ATP. The stretch at 827 to 852 (LVDFDEEVKRINKSIEKLTRDIGMLS) forms a coiled coil.

The protein belongs to the class-I aminoacyl-tRNA synthetase family. ValS type 1 subfamily. In terms of assembly, monomer.

The protein resides in the cytoplasm. It catalyses the reaction tRNA(Val) + L-valine + ATP = L-valyl-tRNA(Val) + AMP + diphosphate. Functionally, catalyzes the attachment of valine to tRNA(Val). As ValRS can inadvertently accommodate and process structurally similar amino acids such as threonine, to avoid such errors, it has a 'posttransfer' editing activity that hydrolyzes mischarged Thr-tRNA(Val) in a tRNA-dependent manner. This Bdellovibrio bacteriovorus (strain ATCC 15356 / DSM 50701 / NCIMB 9529 / HD100) protein is Valine--tRNA ligase.